The primary structure comprises 470 residues: Putative multidrug resistance protein MdtD (470 aa).

At 1-11 the chain is on the periplasmic side; it reads MTELPDNTRWQ. The helical transmembrane segment at 12 to 32 threads the bilayer; it reads LWIVALGFFMQSLDTTIVNTA. Topologically, residues 33–48 are cytoplasmic; that stretch reads LPSMAKSLGESPLHMH. Residues 49–69 form a helical membrane-spanning segment; it reads MVVVSYVLTVAVMLPASGWLA. The Periplasmic segment spans residues 70–76; the sequence is DKIGVRN. Residues 77-97 traverse the membrane as a helical segment; the sequence is IFFAAIVLFTLGSLFCALSGT. Residues 98–101 are Cytoplasmic-facing; sequence LNQL. A helical membrane pass occupies residues 102 to 124; that stretch reads VLARVLQGVGGAMMVPVGRLTVM. Topologically, residues 125-137 are periplasmic; that stretch reads KIVPRAQYMAAMT. A helical transmembrane segment spans residues 138–158; sequence FVTLPGQIGPLLGPALGGVLV. The Cytoplasmic segment spans residues 159 to 164; the sequence is EYASWH. The chain crosses the membrane as a helical span at residues 165–185; the sequence is WIFLINIPVGIVGAMATFMLM. Over 186–196 the chain is Periplasmic; the sequence is PNYTIETRRFD. A helical membrane pass occupies residues 197–217; it reads LPGFLLLAIGMAVLTLALDGS. Over 218–221 the chain is Cytoplasmic; it reads KSMG. A helical transmembrane segment spans residues 222-242; it reads ISPWTLAGLAAGGAAAILLYL. Over 243 to 262 the chain is Periplasmic; the sequence is LHAKKNSGALFSLRLFCTPT. A helical transmembrane segment spans residues 263 to 283; the sequence is FSLGLLGSFAGRIGSGMLPFM. Over 284–285 the chain is Cytoplasmic; the sequence is TP. Residues 286–306 form a helical membrane-spanning segment; sequence VFLQIGLGFSPFHAGLMMIPM. Residues 307–341 lie on the Periplasmic side of the membrane; it reads VLGSMGMKRIVVQIVNRFGYRRVLVATTLGLALVS. A helical transmembrane segment spans residues 342 to 362; that stretch reads LLFMSVALLGWYYLLPLVLLL. Residues 363 to 395 lie on the Cytoplasmic side of the membrane; the sequence is QGMVNSARFSSMNTLTLKDLPDTLASSGNSLLS. Residues 396-416 form a helical membrane-spanning segment; the sequence is MIMQLSMSIGVTIAGMLLGMF. At 417–430 the chain is on the periplasmic side; that stretch reads GQQHIGIDSSATHH. Residues 431 to 451 traverse the membrane as a helical segment; that stretch reads VFMYTWLCMAVIIALPAIIFA. Residues 452–470 lie on the Cytoplasmic side of the membrane; it reads RVPNDTQQNMVISRRKRSL.

The protein belongs to the major facilitator superfamily. TCR/Tet family.

The protein localises to the cell inner membrane. The protein is Putative multidrug resistance protein MdtD of Salmonella paratyphi B (strain ATCC BAA-1250 / SPB7).